Consider the following 180-residue polypeptide: 6,7-dimethyl-8-ribityllumazine synthase (180 aa).

5-amino-6-(D-ribitylamino)uracil contacts are provided by residues Phe23, 61 to 63, and 85 to 87; these read SFE and AVI. Position 90–91 (90–91) interacts with (2S)-2-hydroxy-3-oxobutyl phosphate; sequence QT. His93 serves as the catalytic Proton donor. A 5-amino-6-(D-ribitylamino)uracil-binding site is contributed by Phe118. Arg132 is a binding site for (2S)-2-hydroxy-3-oxobutyl phosphate.

This sequence belongs to the DMRL synthase family.

The catalysed reaction is (2S)-2-hydroxy-3-oxobutyl phosphate + 5-amino-6-(D-ribitylamino)uracil = 6,7-dimethyl-8-(1-D-ribityl)lumazine + phosphate + 2 H2O + H(+). It functions in the pathway cofactor biosynthesis; riboflavin biosynthesis; riboflavin from 2-hydroxy-3-oxobutyl phosphate and 5-amino-6-(D-ribitylamino)uracil: step 1/2. Functionally, catalyzes the formation of 6,7-dimethyl-8-ribityllumazine by condensation of 5-amino-6-(D-ribitylamino)uracil with 3,4-dihydroxy-2-butanone 4-phosphate. This is the penultimate step in the biosynthesis of riboflavin. This is 6,7-dimethyl-8-ribityllumazine synthase from Gloeobacter violaceus (strain ATCC 29082 / PCC 7421).